A 797-amino-acid chain; its full sequence is Protocadherin-3 (797 aa).

The N-terminal stretch at 1–30 (METALAKIPQQRQVFFLTILSLLWKSSSEA) is a signal peptide. Topologically, residues 31–691 (IRYSMPEETE…DNYDVLTLYL (661 aa)) are extracellular. Cadherin domains are found at residues 35 to 133 (MPEE…SPEF), 138 to 242 (MLLT…SPQF), 247 to 346 (YKVQ…APEL), 351 to 450 (LTVL…APAF), and 455 to 560 (YTMF…APFV). N-linked (GlcNAc...) asparagine glycans are attached at residues Asn169, Asn276, and Asn417. Asn566 carries N-linked (GlcNAc...) asparagine glycosylation. Residues 567 to 670 (ASAPCTELLP…VVDGFSQPYL (104 aa)) enclose the Cadherin 6 domain. A helical membrane pass occupies residues 692-712 (VIALASVSSLFLLSVVLFVGV). Residues 713-797 (RLCRRAREAS…AVVHNSVGFY (85 aa)) lie on the Cytoplasmic side of the membrane.

As to expression, expressed in brain.

It is found in the cell membrane. Potential calcium-dependent cell-adhesion protein. May be involved in the establishment and maintenance of specific neuronal connections in the brain. This is Protocadherin-3 (Pcdh3) from Rattus norvegicus (Rat).